Consider the following 860-residue polypeptide: Probable inorganic carbon transporter subunit DabA (860 aa).

The tract at residues 1–32 (MTTTSLGADAAHTHAMVPSAIPPEGSDAAGPD) is disordered. Residues cysteine 369, aspartate 371, histidine 551, and cysteine 566 each contribute to the Zn(2+) site.

The protein belongs to the inorganic carbon transporter (TC 9.A.2) DabA family. In terms of assembly, forms a complex with DabB. It depends on Zn(2+) as a cofactor.

The protein resides in the cell inner membrane. In terms of biological role, part of an energy-coupled inorganic carbon pump. This chain is Probable inorganic carbon transporter subunit DabA, found in Ralstonia pickettii (strain 12D).